Here is a 366-residue protein sequence, read N- to C-terminus: Pyruvate dehydrogenase E1 component subunit beta, mitochondrial (366 aa).

A mitochondrion-targeting transit peptide spans 1–33 (MFSRLPTSLARNVARRAPTSFVRPSAAAAALRF). Glutamate 95 lines the thiamine diphosphate pocket. Residues alanine 196, isoleucine 197, aspartate 199, and asparagine 201 each contribute to the K(+) site.

In terms of assembly, pyruvate dehydrogenase (E1) is a tetramer of 2 alpha and 2 beta subunits. Eukaryotic pyruvate dehydrogenase (PDH) complexes are organized as a core consisting of the oligomeric dihydrolipoamide acetyl-transferase (E2), around which are arranged multiple copies of pyruvate dehydrogenase (E1), dihydrolipoamide dehydrogenase (E3) and protein X (E3BP) bound by non-covalent bonds. It depends on thiamine diphosphate as a cofactor.

It is found in the mitochondrion matrix. The catalysed reaction is N(6)-[(R)-lipoyl]-L-lysyl-[protein] + pyruvate + H(+) = N(6)-[(R)-S(8)-acetyldihydrolipoyl]-L-lysyl-[protein] + CO2. Its function is as follows. The pyruvate dehydrogenase complex catalyzes the overall conversion of pyruvate to acetyl-CoA and CO(2). This Saccharomyces cerevisiae (strain ATCC 204508 / S288c) (Baker's yeast) protein is Pyruvate dehydrogenase E1 component subunit beta, mitochondrial (PDB1).